An 813-amino-acid chain; its full sequence is Leucine--tRNA ligase (813 aa).

The 'HIGH' region signature appears at 42–52 (PYTSGNLHIGH). The 'KMSKS' region signature appears at 580-584 (KMSKS). Lys583 contacts ATP.

This sequence belongs to the class-I aminoacyl-tRNA synthetase family.

It localises to the cytoplasm. It carries out the reaction tRNA(Leu) + L-leucine + ATP = L-leucyl-tRNA(Leu) + AMP + diphosphate. This is Leucine--tRNA ligase from Dehalococcoides mccartyi (strain ATCC BAA-2100 / JCM 16839 / KCTC 5957 / BAV1).